Consider the following 278-residue polypeptide: MREEVLKRILLIIGAILMAIICLFPFIWMIVVSFAEDPTFLGSPLVEYKSTLENYVRVLSDPTLHFPAYLKNSIIIASLVTLTTVSISSLAAYAVSRIEFKGRLLIPIFVLGLSMFPQISLVGYLFKFIEKLGWVNTYQALYFPYVAWTLPLSLWILLSYFSQLPKDLDEAAMIDGASRIKTLTTIILPLSAPALFSTALLVFIAAFNEFMFALLFTTDHRARTVPVGIALFQGVHGEIPWGSVMAASVISTIPLVIMALLFQKYIVSGLTAGALKGE.

A run of 6 helical transmembrane segments spans residues 12–32 (IIGA…MIVV), 74–94 (IIIA…AAYA), 106–126 (IPIF…GYLF), 141–161 (LYFP…LSYF), 186–206 (IILP…FIAA), and 242–262 (GSVM…ALLF). One can recognise an ABC transmembrane type-1 domain in the interval 70–262 (LKNSIIIASL…IPLVIMALLF (193 aa)).

Belongs to the binding-protein-dependent transport system permease family. As to quaternary structure, the complex is composed of two ATP-binding proteins (MalK), two transmembrane proteins (MalG and MalF) and a solute-binding protein (MalE).

The protein localises to the cell membrane. Functionally, part of the ABC transporter complex MalEFGK involved in trehalose/maltose import. Responsible for the translocation of the substrate across the membrane. The protein is Trehalose/maltose transport system permease protein MalG (malG) of Thermococcus litoralis (strain ATCC 51850 / DSM 5473 / JCM 8560 / NS-C).